Reading from the N-terminus, the 407-residue chain is Phosphoglycerate kinase (407 aa).

Substrate contacts are provided by residues 24–26 (DFN), R40, 63–66 (HLGR), R121, and R154. ATP-binding positions include K205, E337, and 363 to 366 (GGDS).

The protein belongs to the phosphoglycerate kinase family. Monomer.

It is found in the cytoplasm. The catalysed reaction is (2R)-3-phosphoglycerate + ATP = (2R)-3-phospho-glyceroyl phosphate + ADP. The protein operates within carbohydrate degradation; glycolysis; pyruvate from D-glyceraldehyde 3-phosphate: step 2/5. This Gloeobacter violaceus (strain ATCC 29082 / PCC 7421) protein is Phosphoglycerate kinase.